Here is a 272-residue protein sequence, read N- to C-terminus: Orotidine 5'-phosphate decarboxylase (272 aa).

K96 acts as the Proton donor in catalysis.

This sequence belongs to the OMP decarboxylase family. Type 2 subfamily.

It catalyses the reaction orotidine 5'-phosphate + H(+) = UMP + CO2. The protein operates within pyrimidine metabolism; UMP biosynthesis via de novo pathway; UMP from orotate: step 2/2. This chain is Orotidine 5'-phosphate decarboxylase, found in Phocaeicola vulgatus (strain ATCC 8482 / DSM 1447 / JCM 5826 / CCUG 4940 / NBRC 14291 / NCTC 11154) (Bacteroides vulgatus).